We begin with the raw amino-acid sequence, 458 residues long: Peptidyl-prolyl cis-trans isomerase FKBP4 (458 aa).

An N-acetylmethionine; in peptidyl-prolyl cis-trans isomerase FKBP4; alternate modification is found at M1. The interval 1–24 is disordered; the sequence is MTAEEMKAAENGAQSAPLPLEGVD. Position 2 is an N-acetylthreonine; in peptidyl-prolyl cis-trans isomerase FKBP4, N-terminally processed; partial (T2). The PPIase FKBP-type 1 domain maps to 50–138; it reads GDRVFVHYTG…VFEVELFEFK (89 aa). A Phosphothreonine; by CK2 modification is found at T143. In terms of domain architecture, PPIase FKBP-type 2 spans 167 to 253; sequence GAMVEVALEG…RYEVRLKSFE (87 aa). At Y220 the chain carries Phosphotyrosine. The tract at residues 267–400 is interaction with tubulin; it reads LEQSNIVKER…TQLAVCQQRT (134 aa). TPR repeat units lie at residues 270–303, 319–352, and 353–386; these read SNIVKERGTAYFKEGKYKQALLQYKKIVSWLEYE, LASHLNLAMCHLKLQAFSAAIESCNKALELDSNN, and EKGLFRRGEAHLAVNDFDLARADFQKVLQLYPSN. N6-acetyllysine is present on K282. R373 is subject to Omega-N-methylarginine. Positions 428–458 are disordered; it reads EVAAGDHPTDAEMKGERNNVAENQSRVETEA. Over residues 434–458 the composition is skewed to basic and acidic residues; that stretch reads HPTDAEMKGERNNVAENQSRVETEA. Residue T436 is modified to Phosphothreonine. K441 is covalently cross-linked (Glycyl lysine isopeptide (Lys-Gly) (interchain with G-Cter in SUMO1)). Phosphoserine is present on S452.

As to quaternary structure, homodimer. Interacts with GLMN. Associates with HSP90AA1 and HSPA1A/HSPA1B in steroid hormone receptor complexes. Also interacts with peroxisomal phytanoyl-CoA alpha-hydroxylase (PHYH). Interacts with NR3C1 and dynein. Interacts with HSF1 in the HSP90 complex. Associates with tubulin. Interacts with MAPT/TAU. Interacts (via TPR domain) with S100A1, S100A2 and S100A6; the interaction is Ca(2+) dependent. Interaction with S100A1 and S100A2 (but not with S100A6) leads to inhibition of FKBP4-HSP90 interaction. Interacts with dynein; contributes to NR3C1 transport to the nucleus. In terms of processing, phosphorylation by CK2 results in loss of HSP90 binding activity.

The protein resides in the cytoplasm. The protein localises to the cytosol. It localises to the mitochondrion. It is found in the nucleus. Its subcellular location is the cytoskeleton. It catalyses the reaction [protein]-peptidylproline (omega=180) = [protein]-peptidylproline (omega=0). Inhibited by FK506. Immunophilin protein with PPIase and co-chaperone activities. Component of steroid receptors heterocomplexes through interaction with heat-shock protein 90 (HSP90). May play a role in the intracellular trafficking of heterooligomeric forms of steroid hormone receptors between cytoplasm and nuclear compartments. The isomerase activity controls neuronal growth cones via regulation of TRPC1 channel opening. Also acts as a regulator of microtubule dynamics by inhibiting MAPT/TAU ability to promote microtubule assembly. May have a protective role against oxidative stress in mitochondria. The chain is Peptidyl-prolyl cis-trans isomerase FKBP4 (Fkbp4) from Mus musculus (Mouse).